We begin with the raw amino-acid sequence, 1014 residues long: 2-oxoglutarate dehydrogenase, mitochondrial (1014 aa).

Residues 1–30 constitute a mitochondrion transit peptide; the sequence is MLRFVSSQTCRYSSRGLLKTSLLKNASTVK. Thiamine diphosphate contacts are provided by Arg306, Asp406, Asn439, and Ile441. Mg(2+) contacts are provided by Asp406, Asn439, and Ile441.

The protein belongs to the alpha-ketoglutarate dehydrogenase family. Component of the 2-oxoglutarate dehydrogenase complex (OGDC), also called alpha-ketoglutarate dehydrogenase (KGDH) complex. The copmplex is composed of the catalytic subunits OGDH (2-oxoglutarate dehydrogenase KGD1; also called E1 subunit), DLST (dihydrolipoamide succinyltransferase KGD2; also called E2 subunit) and DLD (dihydrolipoamide dehydrogenase LPD1; also called E3 subunit), and the assembly factor KGD4. The cofactor is thiamine diphosphate. Mg(2+) is required as a cofactor.

The protein resides in the mitochondrion. It localises to the mitochondrion matrix. The protein localises to the mitochondrion nucleoid. It carries out the reaction N(6)-[(R)-lipoyl]-L-lysyl-[protein] + 2-oxoglutarate + H(+) = N(6)-[(R)-S(8)-succinyldihydrolipoyl]-L-lysyl-[protein] + CO2. Its activity is regulated as follows. Catabolite repressed. Functionally, the 2-oxoglutarate dehydrogenase complex catalyzes the overall conversion of 2-oxoglutarate to succinyl-CoA and CO(2). It contains multiple copies of three enzymatic components: 2-oxoglutarate dehydrogenase (E1), dihydrolipoamide succinyltransferase (E2) and lipoamide dehydrogenase (E3). The polypeptide is 2-oxoglutarate dehydrogenase, mitochondrial (KGD1) (Saccharomyces cerevisiae (strain ATCC 204508 / S288c) (Baker's yeast)).